Here is a 557-residue protein sequence, read N- to C-terminus: Formate--tetrahydrofolate ligase (557 aa).

Thr-44–Ser-51 lines the ATP pocket.

It belongs to the formate--tetrahydrofolate ligase family.

The enzyme catalyses (6S)-5,6,7,8-tetrahydrofolate + formate + ATP = (6R)-10-formyltetrahydrofolate + ADP + phosphate. The protein operates within one-carbon metabolism; tetrahydrofolate interconversion. The protein is Formate--tetrahydrofolate ligase of Desulfotalea psychrophila (strain LSv54 / DSM 12343).